A 1041-amino-acid chain; its full sequence is Isoleucine--tRNA ligase (1041 aa).

The 'HIGH' region motif lies at 53–63; the sequence is PFANGLPHYGH. Positions 619-623 match the 'KMSKS' region motif; sequence KMSKS. Lys622 provides a ligand contact to ATP.

The protein belongs to the class-I aminoacyl-tRNA synthetase family. IleS type 2 subfamily. In terms of assembly, monomer. It depends on Zn(2+) as a cofactor.

It localises to the cytoplasm. It catalyses the reaction tRNA(Ile) + L-isoleucine + ATP = L-isoleucyl-tRNA(Ile) + AMP + diphosphate. In terms of biological role, catalyzes the attachment of isoleucine to tRNA(Ile). As IleRS can inadvertently accommodate and process structurally similar amino acids such as valine, to avoid such errors it has two additional distinct tRNA(Ile)-dependent editing activities. One activity is designated as 'pretransfer' editing and involves the hydrolysis of activated Val-AMP. The other activity is designated 'posttransfer' editing and involves deacylation of mischarged Val-tRNA(Ile). This is Isoleucine--tRNA ligase (ileS) from Mycobacterium tuberculosis (strain CDC 1551 / Oshkosh).